Here is a 706-residue protein sequence, read N- to C-terminus: 1,4-alpha-glucan-branching enzyme (706 aa).

(1,4-alpha-D-glucosyl)n contacts are provided by Trp96 and Lys133. Residue Asp358 is the Nucleophile of the active site. Glu419 functions as the Proton donor in the catalytic mechanism.

The protein belongs to the glycosyl hydrolase 13 family. GlgB subfamily. In terms of assembly, monomer.

The protein resides in the cytoplasm. It carries out the reaction Transfers a segment of a (1-&gt;4)-alpha-D-glucan chain to a primary hydroxy group in a similar glucan chain.. It functions in the pathway glycan biosynthesis; glycogen biosynthesis. In terms of biological role, glycogen-branching enzyme participates in the glycogen biosynthetic process along with glycogenin and glycogen synthase. Generates alpha-1,6-glucosidic branches from alpha-1,4-linked glucose chains, to increase solubility of the glycogen polymer. This chain is 1,4-alpha-glucan-branching enzyme (GLC3), found in Candida glabrata (strain ATCC 2001 / BCRC 20586 / JCM 3761 / NBRC 0622 / NRRL Y-65 / CBS 138) (Yeast).